A 347-amino-acid polypeptide reads, in one-letter code: Quinolinate synthase (347 aa).

Residues histidine 47 and serine 68 each contribute to the iminosuccinate site. Position 113 (cysteine 113) interacts with [4Fe-4S] cluster. Iminosuccinate-binding positions include 139–141 and serine 156; that span reads YAN. Cysteine 200 serves as a coordination point for [4Fe-4S] cluster. Residues 226-228 and threonine 243 each bind iminosuccinate; that span reads HPE. [4Fe-4S] cluster is bound at residue cysteine 297.

The protein belongs to the quinolinate synthase family. Type 1 subfamily. [4Fe-4S] cluster is required as a cofactor.

The protein resides in the cytoplasm. It carries out the reaction iminosuccinate + dihydroxyacetone phosphate = quinolinate + phosphate + 2 H2O + H(+). It functions in the pathway cofactor biosynthesis; NAD(+) biosynthesis; quinolinate from iminoaspartate: step 1/1. Catalyzes the condensation of iminoaspartate with dihydroxyacetone phosphate to form quinolinate. This chain is Quinolinate synthase, found in Salmonella paratyphi A (strain ATCC 9150 / SARB42).